We begin with the raw amino-acid sequence, 505 residues long: Monocarboxylate transporter 6 (505 aa).

Topologically, residues 1–17 are cytoplasmic; sequence MPQALERADGSWAWVVL. A helical membrane pass occupies residues 18–38; the sequence is LATMVTQGLTLGFPTCIGIFF. The Extracellular portion of the chain corresponds to 39–53; it reads TELQWEFQASNSETS. Residues 54–74 form a helical membrane-spanning segment; sequence WFPSILTAVLHMAGPLCSILV. The Cytoplasmic segment spans residues 75–80; the sequence is GRFGCR. The chain crosses the membrane as a helical span at residues 81-101; that stretch reads VTVMLGGVLASLGMVASSFSH. Over 102-110 the chain is Extracellular; the sequence is NLSQLYFTA. A helical transmembrane segment spans residues 111-131; it reads GFITGLGMCFSFQSSITVLGF. The Cytoplasmic portion of the chain corresponds to 132–137; it reads YFVRRR. A helical transmembrane segment spans residues 138–158; the sequence is VLANALASMGVSLGITLWPLL. Residues 159–171 lie on the Extracellular side of the membrane; the sequence is SRYLLENLGWRGT. Residues 172 to 192 traverse the membrane as a helical segment; that stretch reads FLVFGGIFLHCCICGAIIRPV. Topologically, residues 193–239 are cytoplasmic; the sequence is ATSVAPETKECPPPPPETPALGCLAACGRTIQRHLAFDILRHNTGYC. The helical transmembrane segment at 240–260 threads the bilayer; the sequence is VYILGVMWSVLGFPLPQVFLV. The Extracellular portion of the chain corresponds to 261–274; the sequence is PYAMWHSVDEQQAA. Residues 275–295 traverse the membrane as a helical segment; that stretch reads LLISIIGFSNIFLRPLAGLMA. The Cytoplasmic segment spans residues 296–305; sequence GRPAFASHRK. Residues 306–326 form a helical membrane-spanning segment; sequence YLFSLALLLNGLTNLVCAASG. At 327 to 329 the chain is on the extracellular side; sequence DFW. A helical transmembrane segment spans residues 330–350; the sequence is VLVGYCLAYSVSMSGIGALIF. Residues 351 to 367 lie on the Cytoplasmic side of the membrane; it reads QVLMDIVPMDQFPRALG. A helical membrane pass occupies residues 368–388; that stretch reads LFTVLDGLAFLISPPLAGLLL. Over 389–396 the chain is Extracellular; it reads DATNNFSY. A helical membrane pass occupies residues 397 to 417; the sequence is VFYMSSFFLISAALFMGGSFY. The Cytoplasmic portion of the chain corresponds to 418 to 505; that stretch reads ALQKKEQGKQ…QTALGWNSPT (88 aa). The tract at residues 443-464 is disordered; that stretch reads KDGPGKQRSPEIMCQSSRQPRP.

It belongs to the major facilitator superfamily. Monocarboxylate porter (TC 2.A.1.13) family. Highly expressed in kidney.

The protein localises to the cell membrane. Its function is as follows. Proton-linked monocarboxylate transporter. Catalyzes the rapid transport across the plasma membrane of many monocarboxylates such as lactate, pyruvate, branched-chain oxo acids derived from leucine, valine and isoleucine, and the ketone bodies acetoacetate, beta-hydroxybutyrate and acetate. This chain is Monocarboxylate transporter 6 (SLC16A5), found in Homo sapiens (Human).